The chain runs to 89 residues: Porphobilinogen deaminase (89 aa).

The protein belongs to the HMBS family. Monomer. Dipyrromethane is required as a cofactor.

The enzyme catalyses 4 porphobilinogen + H2O = hydroxymethylbilane + 4 NH4(+). The protein operates within porphyrin-containing compound metabolism; protoporphyrin-IX biosynthesis; coproporphyrinogen-III from 5-aminolevulinate: step 2/4. Functionally, tetrapolymerization of the monopyrrole PBG into the hydroxymethylbilane pre-uroporphyrinogen in several discrete steps. This chain is Porphobilinogen deaminase (hemC), found in Dickeya chrysanthemi (Pectobacterium chrysanthemi).